We begin with the raw amino-acid sequence, 351 residues long: 1-aminocyclopropane-1-carboxylate oxidase homolog 4 (351 aa).

In terms of domain architecture, Fe2OG dioxygenase spans 200–304 (KSQYMVGQHY…AIVFSTFMRA (105 aa)). Fe cation-binding residues include H224, D226, and H280. R291 provides a ligand contact to 2-oxoglutarate.

This sequence belongs to the iron/ascorbate-dependent oxidoreductase family. Fe(2+) is required as a cofactor.

In Arabidopsis thaliana (Mouse-ear cress), this protein is 1-aminocyclopropane-1-carboxylate oxidase homolog 4.